We begin with the raw amino-acid sequence, 301 residues long: Glycine--tRNA ligase alpha subunit (301 aa).

The protein belongs to the class-II aminoacyl-tRNA synthetase family. In terms of assembly, tetramer of two alpha and two beta subunits.

Its subcellular location is the cytoplasm. It catalyses the reaction tRNA(Gly) + glycine + ATP = glycyl-tRNA(Gly) + AMP + diphosphate. In Nitrosospira multiformis (strain ATCC 25196 / NCIMB 11849 / C 71), this protein is Glycine--tRNA ligase alpha subunit.